The following is a 489-amino-acid chain: 3-octaprenyl-4-hydroxybenzoate carboxy-lyase (489 aa).

A Mn(2+)-binding site is contributed by N172. Residues 175–177 (IYR), 189–191 (RWL), and 194–195 (RG) contribute to the prenylated FMN site. Residue E238 participates in Mn(2+) binding. Catalysis depends on D287, which acts as the Proton donor.

Belongs to the UbiD family. In terms of assembly, homohexamer. Requires prenylated FMN as cofactor. The cofactor is Mn(2+).

It localises to the cell membrane. It catalyses the reaction a 4-hydroxy-3-(all-trans-polyprenyl)benzoate + H(+) = a 2-(all-trans-polyprenyl)phenol + CO2. The protein operates within cofactor biosynthesis; ubiquinone biosynthesis. In terms of biological role, catalyzes the decarboxylation of 3-octaprenyl-4-hydroxy benzoate to 2-octaprenylphenol, an intermediate step in ubiquinone biosynthesis. This is 3-octaprenyl-4-hydroxybenzoate carboxy-lyase from Klebsiella pneumoniae (strain 342).